We begin with the raw amino-acid sequence, 450 residues long: Chromosomal replication initiator protein DnaA 2 (450 aa).

Residues 1-87 are domain I, interacts with DnaA modulators; sequence MLTCNECTTW…LEFVVAEHKK (87 aa). The domain II stretch occupies residues 87-114; sequence KPSAPVASQKESNEGISEVFEETKDFEL. The tract at residues 115 to 330 is domain III, AAA+ region; it reads KLNLSYRFDN…GAINKLTAYC (216 aa). 4 residues coordinate ATP: Gly-159, Gly-161, Lys-162, and Thr-163. A domain IV, binds dsDNA region spans residues 331-450; the sequence is RLFGKSLTET…VNLCKNHIVG (120 aa).

It belongs to the DnaA family. In terms of assembly, oligomerizes as a right-handed, spiral filament on DNA at oriC.

It localises to the cytoplasm. In terms of biological role, plays an essential role in the initiation and regulation of chromosomal replication. ATP-DnaA binds to the origin of replication (oriC) to initiate formation of the DNA replication initiation complex once per cell cycle. Binds the DnaA box (a 9 base pair repeat at the origin) and separates the double-stranded (ds)DNA. Forms a right-handed helical filament on oriC DNA; dsDNA binds to the exterior of the filament while single-stranded (ss)DNA is stabiized in the filament's interior. The ATP-DnaA-oriC complex binds and stabilizes one strand of the AT-rich DNA unwinding element (DUE), permitting loading of DNA polymerase. After initiation quickly degrades to an ADP-DnaA complex that is not apt for DNA replication. Binds acidic phospholipids. This is Chromosomal replication initiator protein DnaA 2 from Chlamydia pneumoniae (Chlamydophila pneumoniae).